A 604-amino-acid chain; its full sequence is Elongation factor 4 (604 aa).

The tr-type G domain occupies 7–189 (KNIRNFCIIA…QIVTKIPAPS (183 aa)). GTP-binding positions include 19 to 24 (DHGKST) and 136 to 139 (NKID).

This sequence belongs to the TRAFAC class translation factor GTPase superfamily. Classic translation factor GTPase family. LepA subfamily.

It localises to the cell membrane. The enzyme catalyses GTP + H2O = GDP + phosphate + H(+). In terms of biological role, required for accurate and efficient protein synthesis under certain stress conditions. May act as a fidelity factor of the translation reaction, by catalyzing a one-codon backward translocation of tRNAs on improperly translocated ribosomes. Back-translocation proceeds from a post-translocation (POST) complex to a pre-translocation (PRE) complex, thus giving elongation factor G a second chance to translocate the tRNAs correctly. Binds to ribosomes in a GTP-dependent manner. The sequence is that of Elongation factor 4 from Lachnospira eligens (strain ATCC 27750 / DSM 3376 / VPI C15-48 / C15-B4) (Eubacterium eligens).